Consider the following 355-residue polypeptide: Elongation factor Ts, mitochondrial (355 aa).

Residues 1–46 (MIRSLNFALRNCNKNILINSNKITINNGLLLKKNNFCTQSTSEVKV) constitute a mitochondrion transit peptide.

Belongs to the EF-Ts family.

Its subcellular location is the mitochondrion. Associates with the EF-Tu.GDP complex and induces the exchange of GDP to GTP. It remains bound to the aminoacyl-tRNA.EF-Tu.GTP complex up to the GTP hydrolysis stage on the ribosome. This Dictyostelium discoideum (Social amoeba) protein is Elongation factor Ts, mitochondrial (tsfm).